The sequence spans 67 residues: Large ribosomal subunit protein uL29 (67 aa).

The protein belongs to the universal ribosomal protein uL29 family.

In Ruminiclostridium cellulolyticum (strain ATCC 35319 / DSM 5812 / JCM 6584 / H10) (Clostridium cellulolyticum), this protein is Large ribosomal subunit protein uL29.